The sequence spans 360 residues: MNPSVQQKLENLSHRFEEITGLLATPEVQNDQNRFKALSREYAQLEPCVACFRRYRETLEGLDHAQALLQDPDPEVRSLAREELETGRKRCDALEQELQILLLPRDPNDERNVFLEVRAGTGGAEAAIFAGDLQRMYSRYAERQGWRAEIVSESEGEHGGYKEVVMRISGQNVYSRLKFEAGTHRVQRVPTTEAQGRIHTSACTVAILPEFDDVEIDINPADLRIDTFRASGAGGQHVNRTDSAIRITHIPTGTVVECQDERSQHKNRARAMSLLQARILAAAQEKQNSEIAASRKLQVGSGDRSERIRTYNFPQGRLTDHRINLTIYRLDAIMEGDLDPVIDPLLQEHQADMLASLAGS.

At Gln236 the chain carries N5-methylglutamine.

Belongs to the prokaryotic/mitochondrial release factor family. Methylated by PrmC. Methylation increases the termination efficiency of RF1.

The protein resides in the cytoplasm. Peptide chain release factor 1 directs the termination of translation in response to the peptide chain termination codons UAG and UAA. The protein is Peptide chain release factor 1 of Methylococcus capsulatus (strain ATCC 33009 / NCIMB 11132 / Bath).